Consider the following 371-residue polypeptide: 4-hydroxy-3-methylbut-2-en-1-yl diphosphate synthase (flavodoxin) (371 aa).

[4Fe-4S] cluster-binding residues include cysteine 270, cysteine 273, cysteine 305, and glutamate 312.

The protein belongs to the IspG family. It depends on [4Fe-4S] cluster as a cofactor.

It carries out the reaction (2E)-4-hydroxy-3-methylbut-2-enyl diphosphate + oxidized [flavodoxin] + H2O + 2 H(+) = 2-C-methyl-D-erythritol 2,4-cyclic diphosphate + reduced [flavodoxin]. It participates in isoprenoid biosynthesis; isopentenyl diphosphate biosynthesis via DXP pathway; isopentenyl diphosphate from 1-deoxy-D-xylulose 5-phosphate: step 5/6. Its function is as follows. Converts 2C-methyl-D-erythritol 2,4-cyclodiphosphate (ME-2,4cPP) into 1-hydroxy-2-methyl-2-(E)-butenyl 4-diphosphate. This chain is 4-hydroxy-3-methylbut-2-en-1-yl diphosphate synthase (flavodoxin), found in Shewanella piezotolerans (strain WP3 / JCM 13877).